Consider the following 77-residue polypeptide: DNA-directed RNA polymerase subunit omega (77 aa).

It belongs to the RNA polymerase subunit omega family. As to quaternary structure, the RNAP catalytic core consists of 2 alpha, 1 beta, 1 beta' and 1 omega subunit. When a sigma factor is associated with the core the holoenzyme is formed, which can initiate transcription.

It catalyses the reaction RNA(n) + a ribonucleoside 5'-triphosphate = RNA(n+1) + diphosphate. Promotes RNA polymerase assembly. Latches the N- and C-terminal regions of the beta' subunit thereby facilitating its interaction with the beta and alpha subunits. The polypeptide is DNA-directed RNA polymerase subunit omega (Nitratidesulfovibrio vulgaris (strain ATCC 29579 / DSM 644 / CCUG 34227 / NCIMB 8303 / VKM B-1760 / Hildenborough) (Desulfovibrio vulgaris)).